A 446-amino-acid chain; its full sequence is CBL-interacting protein kinase 8 (446 aa).

Residues 13 to 266 (YEVGRTIGEG…IEEIRNDEWF (254 aa)) enclose the Protein kinase domain. Residues 19-27 (IGEGTFAKV) and K42 contribute to the ATP site. The Proton acceptor role is filled by D136. Residues 154-181 (DFGLSAWPAQGGALLRTTCGTPNYVAPE) are activation loop. An NAF domain is found at 301–329 (LDDEAGPLTLNAFDLIILSQGLNLAALFD). The PPI stretch occupies residues 336-365 (KLQNRFLSRKPAKVIMSSMEVVAQSMGYKT).

The protein belongs to the protein kinase superfamily. CAMK Ser/Thr protein kinase family. SNF1 subfamily. It depends on Mn(2+) as a cofactor.

It carries out the reaction L-seryl-[protein] + ATP = O-phospho-L-seryl-[protein] + ADP + H(+). The enzyme catalyses L-threonyl-[protein] + ATP = O-phospho-L-threonyl-[protein] + ADP + H(+). CIPK serine-threonine protein kinases interact with CBL proteins. Binding of a CBL protein to the regulatory NAF domain of CIPK protein lead to the activation of the kinase in a calcium-dependent manner. In Oryza sativa subsp. japonica (Rice), this protein is CBL-interacting protein kinase 8 (CIPK8).